Consider the following 151-residue polypeptide: Putative pre-16S rRNA nuclease (151 aa).

The protein belongs to the YqgF nuclease family.

It localises to the cytoplasm. Functionally, could be a nuclease involved in processing of the 5'-end of pre-16S rRNA. This Myxococcus xanthus (strain DK1622) protein is Putative pre-16S rRNA nuclease.